The chain runs to 340 residues: MPIATPEVYNEMLDRAKAGKFAYPAINVTSSQTLNAALRGFAEAESDGIVQISTGGAEFLGGQYSKDMVTGAVALAEFAHIIAEKYPVNIALHTDHCPKDKLDGYVRPLLALSKKRVEAGLGPLFQSHMWDGSAEPLADNLAIAQELLETARAAQIILEVEITPTGGEEDGVSHEINDSLYTTVDDAIRTAEALGLGEKGRYLLAASFGNVHGVYKPGNVVLRPELLKELNEGVAARFGKESPFDFVFHGGSGSSEEEIRTALENGVVKMNLDTDTQYAFTRPVAGHMFANYDGVLKVDGEVGNKKAYDPRTWGKLAEASMAARVVEATQHLRSAGNKIK.

Serine 53 lines the D-glyceraldehyde 3-phosphate pocket. Aspartate 95 acts as the Proton donor in catalysis. 4 residues coordinate Zn(2+): histidine 96, aspartate 131, glutamate 161, and histidine 212. Glycine 213 is a binding site for dihydroxyacetone phosphate. Histidine 249 provides a ligand contact to Zn(2+). Dihydroxyacetone phosphate-binding positions include 250 to 252 and 271 to 274; these read GGS and NLDT.

It belongs to the class II fructose-bisphosphate aldolase family. Zn(2+) is required as a cofactor.

The enzyme catalyses beta-D-fructose 1,6-bisphosphate = D-glyceraldehyde 3-phosphate + dihydroxyacetone phosphate. It participates in carbohydrate degradation; glycolysis; D-glyceraldehyde 3-phosphate and glycerone phosphate from D-glucose: step 4/4. In terms of biological role, catalyzes the aldol condensation of dihydroxyacetone phosphate (DHAP or glycerone-phosphate) with glyceraldehyde 3-phosphate (G3P) to form fructose 1,6-bisphosphate (FBP) in gluconeogenesis and the reverse reaction in glycolysis. The polypeptide is Fructose-bisphosphate aldolase (fba) (Streptomyces galbus).